Here is a 596-residue protein sequence, read N- to C-terminus: CRISPR-associated DNA-binding protein Cas12m (596 aa).

The segment at 19-53 is recognition domain (REC1-N); the sequence is EVLRQQLWLAHNLREDLVSLQLAYDDDLKAIWSSY. Residues 54 to 121 form a recognition domain (REC2) region; the sequence is PDVAQAEDTM…RDAIAVVKDD (68 aa). 2 coiled-coil regions span residues 55–83 and 91–117; these read DVAQ…ARIE and TELT…AIAV. The tract at residues 122 to 190 is recognition domain (REC1-C); that stretch reads AAERRKARSD…LRHHRFDGSG (69 aa). Residues 191 to 302 form a wedge domain (WED) region; the sequence is TIAVQLQRQA…RAKLCVTARI (112 aa). The interval 303–313 is linker; the sequence is GDTEPVTSGPT. The tract at residues 314–541 is ruvC-I; it reads VALHLGWRST…RDGVPVTIVA (228 aa). Residue His317 coordinates Mg(2+). The interval 541-577 is target nucleic-acid binding (TNB); sequence AAADFTRTHSRCGHVNPADDRYLSNPVRCDGCGAMYD. 4 residues coordinate Zn(2+): His549, Cys552, Cys569, and Cys572. Positions 578–596 are ruvC-II; that stretch reads QDRSFVTLMLRAATAPSNP. Position 579 (Asp579) interacts with Mg(2+).

It belongs to the CRISPR-associated DNA-binding protein Cas12m family. Binds crRNA and target dsDNA as a monomer. It depends on Mg(2+) as a cofactor. Zn(2+) serves as cofactor.

In terms of biological role, CRISPR (clustered regularly interspaced short palindromic repeat), is an adaptive immune system that provides protection against mobile genetic elements (viruses, transposable elements and conjugative plasmids). CRISPR clusters contain sequences complementary to antecedent mobile elements and target invading nucleic acids. CRISPR clusters are transcribed and processed into CRISPR RNA (crRNA). Recognizes a short motif in the CRISPR repeat sequences (the 5' PAM or protospacer adjacent motif, 5'-TTN-3' in this organism) to help distinguish self versus nonself, as targets within the bacterial CRISPR locus do not have PAMs. Upon expression in E.coli as a CRISPR locus inhibits plasmid propagation when targeted to regions essential for plasmid propagation (replication origin and dnaA). The crRNA-Cas12m complex inhibits transcription from target DNA leading to gene silencing. Cas12m-crRNA binds DNA in a PAM-dependent, crRNA-guided fashion. Binds a 17-bp crRNA-ss-target DNA heteroduplex, in a 56 nucleotide crRNA. No dsDNA, ssDNA or RNA nuclease activity is seen for the crRNA-Cas12m complex. Is required to process pre-crRNA to mature crRNA without a tracrRNA. Upon expression in E.coli as a CRISPR region preferentially binds to its associated crRNA. In Mycolicibacterium mucogenicum (Mycobacterium mucogenicum), this protein is CRISPR-associated DNA-binding protein Cas12m.